A 110-amino-acid polypeptide reads, in one-letter code: Senescence associated gene 20 (110 aa).

This chain is Senescence associated gene 20, found in Arabidopsis thaliana (Mouse-ear cress).